We begin with the raw amino-acid sequence, 193 residues long: Ribosome maturation factor RimM (193 aa).

The PRC barrel domain maps to 100 to 173 (DDEFYYADLE…TLLIDPLAAG (74 aa)).

The protein belongs to the RimM family. As to quaternary structure, binds ribosomal protein uS19.

It is found in the cytoplasm. An accessory protein needed during the final step in the assembly of 30S ribosomal subunit, possibly for assembly of the head region. Essential for efficient processing of 16S rRNA. May be needed both before and after RbfA during the maturation of 16S rRNA. It has affinity for free ribosomal 30S subunits but not for 70S ribosomes. The chain is Ribosome maturation factor RimM from Rhizobium etli (strain CIAT 652).